The primary structure comprises 338 residues: Holliday junction branch migration complex subunit RuvB (338 aa).

Residues 4 to 184 (SDRLVSGKAR…FGISHHLQYY (181 aa)) form a large ATPase domain (RuvB-L) region. ATP contacts are provided by residues Arg24, Gly65, Lys68, Thr69, Thr70, 131–133 (EDY), Arg174, Tyr184, and Arg221. Thr69 serves as a coordination point for Mg(2+). The small ATPAse domain (RuvB-S) stretch occupies residues 185-255 (HHDELTQIVM…LADEALELLA (71 aa)). The segment at 258–338 (HLGFDALDRR…NIEVPDGRNS (81 aa)) is head domain (RuvB-H). DNA is bound by residues Arg294, Arg313, and Arg318.

The protein belongs to the RuvB family. As to quaternary structure, homohexamer. Forms an RuvA(8)-RuvB(12)-Holliday junction (HJ) complex. HJ DNA is sandwiched between 2 RuvA tetramers; dsDNA enters through RuvA and exits via RuvB. An RuvB hexamer assembles on each DNA strand where it exits the tetramer. Each RuvB hexamer is contacted by two RuvA subunits (via domain III) on 2 adjacent RuvB subunits; this complex drives branch migration. In the full resolvosome a probable DNA-RuvA(4)-RuvB(12)-RuvC(2) complex forms which resolves the HJ.

The protein localises to the cytoplasm. It carries out the reaction ATP + H2O = ADP + phosphate + H(+). In terms of biological role, the RuvA-RuvB-RuvC complex processes Holliday junction (HJ) DNA during genetic recombination and DNA repair, while the RuvA-RuvB complex plays an important role in the rescue of blocked DNA replication forks via replication fork reversal (RFR). RuvA specifically binds to HJ cruciform DNA, conferring on it an open structure. The RuvB hexamer acts as an ATP-dependent pump, pulling dsDNA into and through the RuvAB complex. RuvB forms 2 homohexamers on either side of HJ DNA bound by 1 or 2 RuvA tetramers; 4 subunits per hexamer contact DNA at a time. Coordinated motions by a converter formed by DNA-disengaged RuvB subunits stimulates ATP hydrolysis and nucleotide exchange. Immobilization of the converter enables RuvB to convert the ATP-contained energy into a lever motion, pulling 2 nucleotides of DNA out of the RuvA tetramer per ATP hydrolyzed, thus driving DNA branch migration. The RuvB motors rotate together with the DNA substrate, which together with the progressing nucleotide cycle form the mechanistic basis for DNA recombination by continuous HJ branch migration. Branch migration allows RuvC to scan DNA until it finds its consensus sequence, where it cleaves and resolves cruciform DNA. In Dichelobacter nodosus (strain VCS1703A), this protein is Holliday junction branch migration complex subunit RuvB.